Consider the following 412-residue polypeptide: Inactive serine protease 35 (412 aa).

Positions 1-23 are cleaved as a signal peptide; that stretch reads MGAMFFGLMLFTLGWTLIDGSES. An N-linked (GlcNAc...) asparagine glycan is attached at N110. Positions 124-407 constitute a Peptidase S1 domain; the sequence is VYGTDSRFSI…ICLWMHGDDA (284 aa). C154 and C170 are joined by a disulfide. A compositionally biased stretch (basic residues) spans 192–207; sequence RNKGGGKRRRGSRRNR. The segment at 192–246 is disordered; that stretch reads RNKGGGKRRRGSRRNRREVSGAGREGSQDSLKETAKAGRRRKGSARRQRAADGRP. The span at 217–227 shows a compositional bias: basic and acidic residues; that stretch reads GSQDSLKETAK. Basic residues predominate over residues 228 to 239; the sequence is AGRRRKGSARRQ.

It belongs to the peptidase S1 family.

The protein resides in the secreted. This Bos taurus (Bovine) protein is Inactive serine protease 35 (PRSS35).